Consider the following 333-residue polypeptide: Mitochondrial thiamine pyrophosphate carrier 1 (333 aa).

Solcar repeat units lie at residues 12–115 (GSRL…ITQF), 129–215 (PPSV…LRPR), and 222–318 (PYSS…ALKL). 6 helical membrane-spanning segments follow: residues 17–35 (VTAAGATAGLISRFVIAPL), 96–112 (LLYVSYAAVQFTTYRSI), 135–155 (FIAGASAGGVATAVTYPLDLL), 190–209 (GLGPGLAQIIPYMGTFFCVY), 221–238 (LPYSSGSAVAGVLASVMA), and 293–310 (GLTVSLFKAAPASAVTMW).

It belongs to the mitochondrial carrier (TC 2.A.29) family.

The protein resides in the mitochondrion inner membrane. In terms of biological role, mitochondrial transporter that mediates uptake of thiamine pyrophosphate (ThPP) into mitochondria. This chain is Mitochondrial thiamine pyrophosphate carrier 1 (tpc-1), found in Neurospora crassa (strain ATCC 24698 / 74-OR23-1A / CBS 708.71 / DSM 1257 / FGSC 987).